A 184-amino-acid chain; its full sequence is Oligoribonuclease (184 aa).

Residues 8–169 (LIWIDLEMTG…EDIHESIIEL (162 aa)) enclose the Exonuclease domain. Residue tyrosine 129 is part of the active site.

This sequence belongs to the oligoribonuclease family.

It localises to the cytoplasm. In terms of biological role, 3'-to-5' exoribonuclease specific for small oligoribonucleotides. In Buchnera aphidicola subsp. Schizaphis graminum (strain Sg), this protein is Oligoribonuclease.